The following is a 602-amino-acid chain: Na(+)/dicarboxylate cotransporter 3 (602 aa).

At M1 to R16 the chain is on the cytoplasmic side. The chain crosses the membrane as a helical span at residues L17–K37. Residues E38–E55 lie on the Extracellular side of the membrane. Residues A56–L76 form a helical membrane-spanning segment. The Cytoplasmic segment spans residues P77 to C82. Residues P83–I103 form a helical membrane-spanning segment. The Extracellular portion of the chain corresponds to E104 to F137. Residues L138 to I158 form a helical membrane-spanning segment. Residues L159–N229 lie on the Cytoplasmic side of the membrane. The helical transmembrane segment at I230 to L250 threads the bilayer. Residues T251–W278 lie on the Extracellular side of the membrane. The chain crosses the membrane as a helical span at residues F279–F299. The Cytoplasmic segment spans residues L300–G336. Residues P337–F357 traverse the membrane as a helical segment. Residues T358–N372 lie on the Extracellular side of the membrane. The chain crosses the membrane as a helical span at residues P373–P393. The Cytoplasmic portion of the chain corresponds to S394–Q422. The helical intramembrane region spans E423–C443. The Cytoplasmic segment spans residues E444–N461. Residues V462–A482 form a helical membrane-spanning segment. Over S483–H505 the chain is Extracellular. The helical transmembrane segment at P506 to S526 threads the bilayer. Residues T527 to R546 lie on the Cytoplasmic side of the membrane. A helical transmembrane segment spans residues T547 to A567. Residues Q568–L602 are Extracellular-facing. Residues N586 and N596 are each glycosylated (N-linked (GlcNAc...) asparagine).

It belongs to the SLC13A/DASS transporter (TC 2.A.47) family. NADC subfamily. Expression is highest in kidney. Detected in placenta, brain, liver and pancreas.

The protein localises to the cell membrane. It carries out the reaction succinate(out) + 3 Na(+)(out) = succinate(in) + 3 Na(+)(in). The enzyme catalyses 2-oxoglutarate(out) + 3 Na(+)(out) = 2-oxoglutarate(in) + 3 Na(+)(in). The catalysed reaction is N-acetyl-L-aspartate(out) + 3 Na(+)(out) = N-acetyl-L-aspartate(in) + 3 Na(+)(in). It catalyses the reaction glutarate(out) + 3 Na(+)(out) = glutarate(in) + 3 Na(+)(in). It carries out the reaction fumarate(out) + 3 Na(+)(out) = fumarate(in) + 3 Na(+)(in). The enzyme catalyses malate(out) + 3 Na(+)(out) = malate(in) + 3 Na(+)(in). The catalysed reaction is 2,2-dimethylsuccinate(out) + 3 Na(+)(out) = 2,2-dimethylsuccinate(in) + 3 Na(+)(in). It catalyses the reaction 2,3-dimethylsuccinate(out) + 3 Na(+)(out) = 2,3-dimethylsuccinate(in) + 3 Na(+)(in). It carries out the reaction itaconate(out) + 3 Na(+)(out) = itaconate(in) + 3 Na(+)(in). Li(+) decreases succinate transport in the presence of Na(+). In terms of biological role, high-affinity sodium-dicarboxylate cotransporter that accepts a range of substrates with 4-6 carbon atoms, such as the citric acid cycle intermediates succinate and alpha-ketoglutarate (2-oxoglutarate), as well as other compounds including N-acetyl-L-aspartate. Transports the dicarboxylate into the cell with a probable stoichiometry of 3 Na(+) for 1 divalent dicarboxylate, rendering the process electrogenic. Can transport citrate in a Na(+)-dependent manner, recognizing the divalent form of citrate rather than the trivalent form which is normally found in blood. Imports itaconate in hepatocytes leading to activation of TFEB-dependent lysosomal biogenesis involved in antibacterial innate immune response. In Homo sapiens (Human), this protein is Na(+)/dicarboxylate cotransporter 3 (SLC13A3).